Here is a 105-residue protein sequence, read N- to C-terminus: Insulin (105 aa).

The signal sequence occupies residues 1 to 24 (MALWTRLRPLLALLALWPPPPARA). 3 disulfides stabilise this stretch: C31–C91, C43–C104, and C90–C95. A propeptide spans 57–82 (EVEGPQVGALELAGGPGAGGLEGPPQ) (c peptide).

Belongs to the insulin family. Heterodimer of a B chain and an A chain linked by two disulfide bonds.

It is found in the secreted. In terms of biological role, insulin decreases blood glucose concentration. It increases cell permeability to monosaccharides, amino acids and fatty acids. It accelerates glycolysis, the pentose phosphate cycle, and glycogen synthesis in liver. The sequence is that of Insulin (INS) from Bos taurus (Bovine).